The sequence spans 414 residues: 3-oxo-isoapionate-4-phosphate transcarboxylase/hydrolase (414 aa).

Mg(2+) is bound by residues Lys-180, Asp-182, and Glu-183. Position 180 is an N6-carboxylysine (Lys-180).

Belongs to the RuBisCO large chain family. Mg(2+) serves as cofactor.

It carries out the reaction 3-oxoisoapionate 4-phosphate + H2O = (2R)-3-phosphoglycerate + glycolate + H(+). It participates in carbohydrate metabolism. Functionally, involved in catabolism of D-apiose. Catalyzes the conversion of 3-oxo-isoapionate 4-phosphate to 3-phosphoglycerate and glycolate. This chain is 3-oxo-isoapionate-4-phosphate transcarboxylase/hydrolase, found in Xanthobacter autotrophicus (strain ATCC BAA-1158 / Py2).